The chain runs to 349 residues: N-acetyl-gamma-glutamyl-phosphate reductase (349 aa).

Residue C149 is part of the active site.

Belongs to the NAGSA dehydrogenase family. Type 1 subfamily.

The protein localises to the cytoplasm. It catalyses the reaction N-acetyl-L-glutamate 5-semialdehyde + phosphate + NADP(+) = N-acetyl-L-glutamyl 5-phosphate + NADPH + H(+). The protein operates within amino-acid biosynthesis; L-arginine biosynthesis; N(2)-acetyl-L-ornithine from L-glutamate: step 3/4. Its function is as follows. Catalyzes the NADPH-dependent reduction of N-acetyl-5-glutamyl phosphate to yield N-acetyl-L-glutamate 5-semialdehyde. In Acinetobacter baumannii (strain ACICU), this protein is N-acetyl-gamma-glutamyl-phosphate reductase.